We begin with the raw amino-acid sequence, 497 residues long: Thiamine transporter 1 (497 aa).

N-acetylmethionine is present on methionine 1. Residues 1-28 (MDVPGPVSRRAAAAAATVLLRTARVRRE) are Cytoplasmic-facing. A helical transmembrane segment spans residues 29–46 (CWFLPTALLCAYGFFASL). Residues 47-72 (RPSEPFLTPYLLGPDKNLTEREVFNE) are Extracellular-facing. Asparagine 63 is a glycosylation site (N-linked (GlcNAc...) asparagine). Residues 73–91 (IYPVWTYSYLVLLFPVFLA) traverse the membrane as a helical segment. Topologically, residues 92–99 (TDYLRYKP) are cytoplasmic. The chain crosses the membrane as a helical span at residues 100–118 (VVLLQGLSLIVTWFMLLYA). Residues 119 to 128 (QGLLAIQFLE) lie on the Extracellular side of the membrane. A helical membrane pass occupies residues 129–149 (FFYGIATATEIAYYSYIYSVV). The Cytoplasmic segment spans residues 150 to 165 (DLGMYQKVTSYCRSAT). The helical transmembrane segment at 166–185 (LVGFTVGSVLGQILVSVAGW) threads the bilayer. Over 186–191 (SLFSLN) the chain is Extracellular. Residues 192 to 208 (VISLTCVSVAFAVAWFL) traverse the membrane as a helical segment. The Cytoplasmic segment spans residues 209-285 (PMPQKSLFFH…LLVLKVLWND (77 aa)). A Phosphoserine modification is found at serine 222. Residues 286-310 (FLMCYSSRPLLCWSVWWALSTCGYF) form a helical membrane-spanning segment. Residues 311–337 (QVVNYTQGLWEKVMPSRYAAIYNGGVE) lie on the Extracellular side of the membrane. The N-linked (GlcNAc...) asparagine glycan is linked to asparagine 314. Residues 338 to 354 (AVSTLLGAVAVFAVGYI) traverse the membrane as a helical segment. Residues 355-363 (KISWSTWGE) are Cytoplasmic-facing. Residues 364 to 380 (MTLSLFSLLIAAAVYIM) form a helical membrane-spanning segment. The Extracellular segment spans residues 381–386 (DTVGNI). The chain crosses the membrane as a helical span at residues 387–409 (WVCYASYVVFRIIYMLLITIATF). The Cytoplasmic portion of the chain corresponds to 410 to 419 (QIAANLSMER). The helical transmembrane segment at 420–443 (YALVFGVNTFIALALQTLLTLIVV) threads the bilayer. Residues 444-455 (DASGLGLEITTQ) are Extracellular-facing. A helical transmembrane segment spans residues 456–479 (FLIYASYFALIAVVFLASGAVSVM). At 480–497 (KKCRKLEDPQSSSQVTTS) the chain is on the cytoplasmic side.

It belongs to the reduced folate carrier (RFC) transporter (TC 2.A.48) family. In terms of assembly, interacts with TSPAN1; this interaction increases the stability of SLC19A2. Interacts with TMEM63B. In terms of tissue distribution, ubiquitous; most abundant in skeletal and cardiac muscle. Medium expression in placenta, heart, liver and kidney, low in lung.

Its subcellular location is the cell membrane. The enzyme catalyses thiamine(out) + H(+)(in) = thiamine(in) + H(+)(out). It catalyses the reaction pyridoxine(out) + n H(+)(out) = pyridoxine(in) + n H(+)(in). With respect to regulation, pyridoxine transport is inhibited by carbonyl cyanide p-trifluoromethoxyphenylhydrazone (FCCP) and carbonyl cyanide m-chlorophenylhydrazone (CCCP). In terms of biological role, high-affinity transporter for the intake of thiamine. Mediates H(+)-dependent pyridoxine transport. The protein is Thiamine transporter 1 (SLC19A2) of Homo sapiens (Human).